The following is a 404-amino-acid chain: Probable thioredoxin reductase ARB_06224 (404 aa).

A signal peptide spans 1–22 (MGVQRLALALIAFTSALTSVIA). 67–75 (DEGIYRNGA) provides a ligand contact to FAD. Cysteine 172 and cysteine 175 are disulfide-bonded. The N-linked (GlcNAc...) asparagine glycan is linked to asparagine 213. 334-343 (DANNDGSTNG) is a binding site for FAD.

Belongs to the class-II pyridine nucleotide-disulfide oxidoreductase family. In terms of assembly, homodimer. The cofactor is FAD.

The protein localises to the secreted. The catalysed reaction is [thioredoxin]-dithiol + NADP(+) = [thioredoxin]-disulfide + NADPH + H(+). This is Probable thioredoxin reductase ARB_06224 from Arthroderma benhamiae (strain ATCC MYA-4681 / CBS 112371) (Trichophyton mentagrophytes).